Consider the following 274-residue polypeptide: Lipoprotein E (274 aa).

The signal sequence occupies residues 1–20 (MKTTLKMTALAALSAFVLAG). The N-palmitoyl cysteine moiety is linked to residue Cys21. Residue Cys21 is the site of S-diacylglycerol cysteine attachment.

The protein localises to the cell outer membrane. The chain is Lipoprotein E (hel) from Haemophilus influenzae (strain ATCC 51907 / DSM 11121 / KW20 / Rd).